Here is a 594-residue protein sequence, read N- to C-terminus: (-)-endo-fenchol synthase, chloroplastic (594 aa).

A chloroplast-targeting transit peptide spans 1-50; it reads MSSLVMHVGIVNKPAITYLPTLSRRASNLHNVSSTRLQTSCSLQLDYKPV. Mg(2+) is bound by residues Asp-348, Asp-352, Asp-492, and Glu-500. The DDXXD motif signature appears at 348-352; that stretch reads DDIYD.

It belongs to the terpene synthase family. Tpsa subfamily. Requires Mg(2+) as cofactor. The cofactor is Mn(2+). Expressed at low levels in leaves.

The protein localises to the plastid. Its subcellular location is the chloroplast. The catalysed reaction is (2E)-geranyl diphosphate = alpha-pinene + diphosphate. The enzyme catalyses (2E)-geranyl diphosphate + H2O = (1S,2S,4R)-endo-fenchol + diphosphate. It catalyses the reaction (2E)-geranyl diphosphate = limonene + diphosphate. It participates in secondary metabolite biosynthesis; terpenoid biosynthesis. In terms of biological role, monoterpene synthase involved in the biosynthesis of volatile compounds widely used in aromatherapy and folk medicine, and present in culinary herbs. Mediates the conversion of (2E)-geranyl diphosphate (GPP) into alpha fenchol, limonene and alpha-pinene and, as minor compounds, into beta-myrcene, alpha-terpinolene and alpha-phellandrene. This chain is (-)-endo-fenchol synthase, chloroplastic, found in Lavandula stoechas (Butterfly lavender).